The sequence spans 278 residues: Urease accessory protein UreD (278 aa).

Belongs to the UreD family. UreD, UreF and UreG form a complex that acts as a GTP-hydrolysis-dependent molecular chaperone, activating the urease apoprotein by helping to assemble the nickel containing metallocenter of UreC. The UreE protein probably delivers the nickel.

The protein localises to the cytoplasm. Functionally, required for maturation of urease via the functional incorporation of the urease nickel metallocenter. In Staphylococcus aureus (strain JH1), this protein is Urease accessory protein UreD.